Consider the following 406-residue polypeptide: Phosphopentomutase (406 aa).

6 residues coordinate Mn(2+): Asp10, Asp305, His310, Asp346, His347, and His358.

This sequence belongs to the phosphopentomutase family. Mn(2+) serves as cofactor.

It is found in the cytoplasm. It catalyses the reaction 2-deoxy-alpha-D-ribose 1-phosphate = 2-deoxy-D-ribose 5-phosphate. The enzyme catalyses alpha-D-ribose 1-phosphate = D-ribose 5-phosphate. Its pathway is carbohydrate degradation; 2-deoxy-D-ribose 1-phosphate degradation; D-glyceraldehyde 3-phosphate and acetaldehyde from 2-deoxy-alpha-D-ribose 1-phosphate: step 1/2. Isomerase that catalyzes the conversion of deoxy-ribose 1-phosphate (dRib-1-P) and ribose 1-phosphate (Rib-1-P) to deoxy-ribose 5-phosphate (dRib-5-P) and ribose 5-phosphate (Rib-5-P), respectively. The sequence is that of Phosphopentomutase from Vibrio cholerae serotype O1 (strain ATCC 39541 / Classical Ogawa 395 / O395).